The following is a 206-amino-acid chain: N-(5'-phosphoribosyl)anthranilate isomerase (206 aa).

Belongs to the TrpF family.

The catalysed reaction is N-(5-phospho-beta-D-ribosyl)anthranilate = 1-(2-carboxyphenylamino)-1-deoxy-D-ribulose 5-phosphate. It participates in amino-acid biosynthesis; L-tryptophan biosynthesis; L-tryptophan from chorismate: step 3/5. The polypeptide is N-(5'-phosphoribosyl)anthranilate isomerase (Pseudomonas savastanoi pv. phaseolicola (strain 1448A / Race 6) (Pseudomonas syringae pv. phaseolicola (strain 1448A / Race 6))).